The primary structure comprises 136 residues: Small ribosomal subunit protein eS17B (136 aa).

Belongs to the eukaryotic ribosomal protein eS17 family. Component of the small ribosomal subunit (SSU). Mature yeast ribosomes consist of a small (40S) and a large (60S) subunit. The 40S small subunit contains 1 molecule of ribosomal RNA (18S rRNA) and 33 different proteins (encoded by 57 genes). The large 60S subunit contains 3 rRNA molecules (25S, 5.8S and 5S rRNA) and 46 different proteins (encoded by 81 genes).

Its subcellular location is the cytoplasm. Functionally, component of the ribosome, a large ribonucleoprotein complex responsible for the synthesis of proteins in the cell. The small ribosomal subunit (SSU) binds messenger RNAs (mRNAs) and translates the encoded message by selecting cognate aminoacyl-transfer RNA (tRNA) molecules. The large subunit (LSU) contains the ribosomal catalytic site termed the peptidyl transferase center (PTC), which catalyzes the formation of peptide bonds, thereby polymerizing the amino acids delivered by tRNAs into a polypeptide chain. The nascent polypeptides leave the ribosome through a tunnel in the LSU and interact with protein factors that function in enzymatic processing, targeting, and the membrane insertion of nascent chains at the exit of the ribosomal tunnel. The polypeptide is Small ribosomal subunit protein eS17B (Saccharomyces cerevisiae (strain ATCC 204508 / S288c) (Baker's yeast)).